The following is a 116-amino-acid chain: Nucleoid-associated protein SACE_0254 (116 aa).

Positions 90 to 116 are disordered; the sequence is LQQEKMGPVTGALGGGQGLGGLGLPGL. Residues 101–116 are compositionally biased toward gly residues; sequence ALGGGQGLGGLGLPGL.

This sequence belongs to the YbaB/EbfC family. As to quaternary structure, homodimer.

It is found in the cytoplasm. The protein localises to the nucleoid. In terms of biological role, binds to DNA and alters its conformation. May be involved in regulation of gene expression, nucleoid organization and DNA protection. This Saccharopolyspora erythraea (strain ATCC 11635 / DSM 40517 / JCM 4748 / NBRC 13426 / NCIMB 8594 / NRRL 2338) protein is Nucleoid-associated protein SACE_0254.